Here is a 258-residue protein sequence, read N- to C-terminus: Imidazole glycerol phosphate synthase subunit HisF (258 aa).

Active-site residues include D11 and D130.

This sequence belongs to the HisA/HisF family. Heterodimer of HisH and HisF.

It is found in the cytoplasm. It catalyses the reaction 5-[(5-phospho-1-deoxy-D-ribulos-1-ylimino)methylamino]-1-(5-phospho-beta-D-ribosyl)imidazole-4-carboxamide + L-glutamine = D-erythro-1-(imidazol-4-yl)glycerol 3-phosphate + 5-amino-1-(5-phospho-beta-D-ribosyl)imidazole-4-carboxamide + L-glutamate + H(+). It participates in amino-acid biosynthesis; L-histidine biosynthesis; L-histidine from 5-phospho-alpha-D-ribose 1-diphosphate: step 5/9. IGPS catalyzes the conversion of PRFAR and glutamine to IGP, AICAR and glutamate. The HisF subunit catalyzes the cyclization activity that produces IGP and AICAR from PRFAR using the ammonia provided by the HisH subunit. The protein is Imidazole glycerol phosphate synthase subunit HisF of Yersinia pseudotuberculosis serotype O:3 (strain YPIII).